The following is a 610-amino-acid chain: Elongation factor 4 (610 aa).

The tr-type G domain maps to 14–196 (NRIRNFSIIA…ALVANIPPPK (183 aa)). GTP-binding positions include 26-31 (DHGKST) and 143-146 (NKID).

This sequence belongs to the TRAFAC class translation factor GTPase superfamily. Classic translation factor GTPase family. LepA subfamily.

Its subcellular location is the cell inner membrane. The enzyme catalyses GTP + H2O = GDP + phosphate + H(+). Required for accurate and efficient protein synthesis under certain stress conditions. May act as a fidelity factor of the translation reaction, by catalyzing a one-codon backward translocation of tRNAs on improperly translocated ribosomes. Back-translocation proceeds from a post-translocation (POST) complex to a pre-translocation (PRE) complex, thus giving elongation factor G a second chance to translocate the tRNAs correctly. Binds to ribosomes in a GTP-dependent manner. In Legionella pneumophila (strain Lens), this protein is Elongation factor 4.